Here is a 68-residue protein sequence, read N- to C-terminus: uncharacterized protein (68 aa).

The disordered stretch occupies residues 1 to 20; sequence MYKQKKKNHPFQCKKKKKKK. Residues 27 to 44 form a helical membrane-spanning segment; it reads IKLLFNYFLFFNFIITTF.

The protein resides in the membrane. This is an uncharacterized protein from Dictyostelium discoideum (Social amoeba).